The following is a 135-amino-acid chain: UPF0299 membrane protein ECA2828 (135 aa).

4 helical membrane-spanning segments follow: residues 5–25, 30–50, 63–83, and 93–113; these read FIVC…LLAG, ALLP…FTLL, GCYL…VGVM, and FGPI…VVGF.

The protein belongs to the UPF0299 family.

It is found in the cell inner membrane. The chain is UPF0299 membrane protein ECA2828 from Pectobacterium atrosepticum (strain SCRI 1043 / ATCC BAA-672) (Erwinia carotovora subsp. atroseptica).